The sequence spans 227 residues: Cleavage and polyadenylation specificity factor subunit 5 (227 aa).

A Nudix hydrolase domain is found at 76 to 201; sequence MRRTVEGVLI…KLVAAPLFEL (126 aa). Residues 102–104 are interaction with RNA; that stretch reads TFF. Positions 109-130 match the Nudix box motif; that stretch reads GELNPGEDEVEGLKRLMTEILG.

Belongs to the Nudix hydrolase family. CPSF5 subfamily. In terms of assembly, homodimer (via N- and C-terminus); binds RNA as homodimer. Component of the cleavage factor Im (CFIm) complex.

The protein localises to the nucleus. It is found in the cytoplasm. Component of the cleavage factor Im (CFIm) complex that functions as an activator of the pre-mRNA 3'-end cleavage and polyadenylation processing required for the maturation of pre-mRNA into functional mRNAs. CFIm contributes to the recruitment of multiprotein complexes on specific sequences on the pre-mRNA 3'-end, so called cleavage and polyadenylation signals (pA signals). Most pre-mRNAs contain multiple pA signals, resulting in alternative cleavage and polyadenylation (APA) producing mRNAs with variable 3'-end formation. The CFIm complex acts as a key regulator of cleavage and polyadenylation site choice during APA through its binding to 5'-UGUA-3' elements localized in the 3'-untranslated region (UTR) for a huge number of pre-mRNAs. Binds to 5'-UGUA-3' elements localized upstream of pA signals that act as enhancers of pre-mRNA 3'-end processing. The homodimer mediates simultaneous sequence-specific recognition of two 5'-UGUA-3' elements within the pre-mRNA. Plays a role in somatic cell fate transitions and pluripotency by regulating widespread changes in gene expression through an APA-dependent function. Binds to chromatin. Binds to, but does not hydrolyze mono- and di-adenosine nucleotides. In Xenopus laevis (African clawed frog), this protein is Cleavage and polyadenylation specificity factor subunit 5.